The primary structure comprises 309 residues: SIPTDATLDLDEQISQLMQCKPLSEQQVRALCEKAKEILMDESNVQPVKSPVTICGDIHGQFHDLAELFRIGGMCPDTNYLFMGDYVDRGYYSVETVTLLVGLKVRYPQRITILRGNHESRQITQVYGFYDECLRKYGNANVWKYFTDLFDYLPLTALVESEIFCLHGGLSPSIETLDNIRNFDRVQEVPHGGPMCDLLWSDPDDRCGWGISPRGAGYTFGQDISNQFNHSNSLKLISRAHQLVMDGYNWAHEAKGGTIFSAPNYCYRCGNMASILEVDDCRNHTFIQFEPAPRRGEPDVTRRTPDYFL.

Residues D57, H59, D85, and N117 each coordinate Mn(2+). H118 (proton donor) is an active-site residue. The Mn(2+) site is built by H167 and H241.

Belongs to the PPP phosphatase family. PP-2A subfamily. Requires Mn(2+) as cofactor.

It catalyses the reaction O-phospho-L-seryl-[protein] + H2O = L-seryl-[protein] + phosphate. It carries out the reaction O-phospho-L-threonyl-[protein] + H2O = L-threonyl-[protein] + phosphate. The sequence is that of Serine/threonine-protein phosphatase PP2A catalytic subunit from Brassica napus (Rape).